The chain runs to 217 residues: Elongation factor Ts (217 aa).

Residues 80-83 (TDFV) form an involved in Mg(2+) ion dislocation from EF-Tu region.

Belongs to the EF-Ts family.

It localises to the cytoplasm. Its function is as follows. Associates with the EF-Tu.GDP complex and induces the exchange of GDP to GTP. It remains bound to the aminoacyl-tRNA.EF-Tu.GTP complex up to the GTP hydrolysis stage on the ribosome. The protein is Elongation factor Ts of Carboxydothermus hydrogenoformans (strain ATCC BAA-161 / DSM 6008 / Z-2901).